Here is a 1042-residue protein sequence, read N- to C-terminus: Isoleucine--tRNA ligase (1042 aa).

The 'HIGH' region signature appears at 48-58; sequence PFATGLPHFGH. The 'KMSKS' region motif lies at 594–598; sequence KMSKS. Lys597 contributes to the ATP binding site.

This sequence belongs to the class-I aminoacyl-tRNA synthetase family. IleS type 2 subfamily. Monomer. Zn(2+) is required as a cofactor.

The protein localises to the cytoplasm. The catalysed reaction is tRNA(Ile) + L-isoleucine + ATP = L-isoleucyl-tRNA(Ile) + AMP + diphosphate. In terms of biological role, catalyzes the attachment of isoleucine to tRNA(Ile). As IleRS can inadvertently accommodate and process structurally similar amino acids such as valine, to avoid such errors it has two additional distinct tRNA(Ile)-dependent editing activities. One activity is designated as 'pretransfer' editing and involves the hydrolysis of activated Val-AMP. The other activity is designated 'posttransfer' editing and involves deacylation of mischarged Val-tRNA(Ile). This is Isoleucine--tRNA ligase from Borreliella burgdorferi (strain ZS7) (Borrelia burgdorferi).